The following is a 77-amino-acid chain: MKNYSKNATYLITVLLFSFVAMLLIIPSKCEAVSNDMQPLEARSADLVPEPRYIIDVPPRCPPGSKFIKNRCRVIVP.

The N-terminal stretch at 1 to 32 is a signal peptide; it reads MKNYSKNATYLITVLLFSFVAMLLIIPSKCEA. The propeptide occupies 33-52; that stretch reads VSNDMQPLEARSADLVPEPR. Cysteine 61 and cysteine 72 are disulfide-bonded.

It belongs to the secapin family. Expressed by the venom gland.

The protein localises to the secreted. Nontoxic peptide. This is Secapin from Vespa magnifica (Hornet).